A 267-amino-acid chain; its full sequence is Eukaryotic translation initiation factor 3 subunit K (267 aa).

A PCI domain is found at 46 to 233; the sequence is FDCYANLALL…EARSEVKSER (188 aa).

This sequence belongs to the eIF-3 subunit K family. As to quaternary structure, component of the eukaryotic translation initiation factor 3 (eIF-3) complex.

Its subcellular location is the cytoplasm. In terms of biological role, component of the eukaryotic translation initiation factor 3 (eIF-3) complex, which is involved in protein synthesis of a specialized repertoire of mRNAs and, together with other initiation factors, stimulates binding of mRNA and methionyl-tRNAi to the 40S ribosome. The eIF-3 complex specifically targets and initiates translation of a subset of mRNAs involved in cell proliferation. This is Eukaryotic translation initiation factor 3 subunit K from Aspergillus niger (strain ATCC MYA-4892 / CBS 513.88 / FGSC A1513).